We begin with the raw amino-acid sequence, 629 residues long: tRNA uridine 5-carboxymethylaminomethyl modification enzyme MnmG (629 aa).

FAD-binding positions include 13–18 (GGGHAG), valine 125, and serine 180. 273–287 (GPRYCPSIEDKIHRF) lines the NAD(+) pocket. Glutamine 370 serves as a coordination point for FAD.

It belongs to the MnmG family. Homodimer. Heterotetramer of two MnmE and two MnmG subunits. FAD is required as a cofactor.

It localises to the cytoplasm. Functionally, NAD-binding protein involved in the addition of a carboxymethylaminomethyl (cmnm) group at the wobble position (U34) of certain tRNAs, forming tRNA-cmnm(5)s(2)U34. The protein is tRNA uridine 5-carboxymethylaminomethyl modification enzyme MnmG of Shewanella oneidensis (strain ATCC 700550 / JCM 31522 / CIP 106686 / LMG 19005 / NCIMB 14063 / MR-1).